The chain runs to 185 residues: MPLDAFSRAVVTADASTSVVSDINALKAFVASGNRRLDAVNAIASNASCAVSDAIAGIVCENQGLIQAGGNLYPNRRFAACLRDTEIILRYVTYALLAGDSSVLDDRALNGLKETYSALGVPTTSTIRAVQILKAIAVAHIQGTNTEARAGAKYRKNETPLVEDRCASIAAEAAGYFDRVIAALS.

The (2R,3E)-phycoerythrobilin site is built by cysteine 49 and cysteine 60. Residue asparagine 71 is modified to N4-methylasparagine. Residues cysteine 81 and cysteine 166 each coordinate (2R,3E)-phycoerythrobilin.

This sequence belongs to the phycobiliprotein family. Heterodimer of an alpha and a beta chain. Contains three covalently linked bilin chromophores.

The protein resides in the cellular thylakoid membrane. Its function is as follows. Light-harvesting photosynthetic bile pigment-protein from the phycobiliprotein complex. In Pseudanabaena tenuis (strain PCC 7409), this protein is C-phycoerythrin beta chain (cpeB).